Consider the following 124-residue polypeptide: LOB domain-containing protein 9 (124 aa).

Residues Ala11–Ile113 form the LOB domain.

This sequence belongs to the LOB domain-containing protein family.

In Arabidopsis thaliana (Mouse-ear cress), this protein is LOB domain-containing protein 9 (LBD9).